An 815-amino-acid polypeptide reads, in one-letter code: Cilia- and flagella-associated protein 251 (815 aa).

10 WD repeats span residues 58–99, 103–148, 166–205, 218–257, 271–308, 379–418, 420–460, 463–502, 511–553, and 573–612; these read GHTS…PTRT, PHRH…TPPE, PAGDVQHSIRFSPNNPAELISNGRRRVYFWSWAPGSPRFQ, QSVGDFVSSVFVPGTTQALTATTDGDLVVWDEQGIAAQVG, IHNCPITLLATVGDFIVSGGEDGYVRFFDPLLRIVAWF, SLLADVVDLAAHPTRAEFAVLGRDGGLQRWDSIAHCLLGG, AFER…DLYV, NTAAGLVRVAVSNTGKHIAAADENHQLLLYAYLPYKHTMR, SHHG…VAAG, and SFAPPLAYFQAFAADTHLLVSGADGTVASWDINTAPLERS.

Identified in a spoke-associated complex containing CFAP61, CFAP91 and CFAP251; the complex is associated with the radial spokes in the axoneme. The complex associates with Calmodulin; the association is calcium sensitive.

Its subcellular location is the cytoplasm. The protein localises to the cytoskeleton. It is found in the flagellum axoneme. As component of a spoke-associated complex, regulates flagellar dynein activity by mediating regulatory signals between the radial spokes and dynein arms. The sequence is that of Cilia- and flagella-associated protein 251 from Chlamydomonas reinhardtii (Chlamydomonas smithii).